The primary structure comprises 708 residues: MDNNNAFQLSFDEQHYAWLAIDVPGEKMNTLQAAFAEEMQAVFATLNEKRGQIKGLIIHSLKPDNFIAGADVRMLEACQSVHEAQALASQGQQMFQQLADLPFPVVAAIHGPCLGGGLELALACDYRVCTEDEVTRLGLPEVMLGLLPGSGGTQRLPRLIGLLPALDLILTGKQLRAKKAKKLGVVDACVPHSVLLDVAKRLLEEKGHKKRAQVTLPIKEKLLANTDLGRKLIFDQAAKKTQQKTRGNYPAAQAILEVIQYGLEKGMHAGLEYEAKRFAELVMTRESKALRSIFFATTEMKKDLGADAKPAPVAAVGVLGGGLMGAGISHVTVAKAKTSVRIKDVANDGVLNALNYNYKLFDKQRQRKILTKAQLQAQMSQLSGGTGFVGFDRCDVVIEAVFEDLKLKQQMVADIEANAKPTTIFATNTSSLPIHQIASQAQRPQNIVGLHYFSPVEKMPLVEVIPHATTSDETIATVVTLARKQGKTPIVVKDCAGFYVNRILAPYMNEAAQVLMAGEPIEKLDAALLDFGFPVGPITLLDEVGVDIGAKIMPILVKELGPRFQGPDVFDVLLKDNRKGRKSGKGFYTYKGSKKKEVDKSVYKLLKLTPESKLNDKEIAMRCLLPMLNEAVRCLDEGIIRSARDGDMGAIFGIGFPPFLGGPFRYMDTLGLTKVVEMMNQHTEKYGERFAPCDGLLTRAGLGEKFYP.

The tract at residues 1-191 (MDNNNAFQLS…KLGVVDACVP (191 aa)) is enoyl-CoA hydratase. The interval 311 to 708 (APVAAVGVLG…RAGLGEKFYP (398 aa)) is 3-hydroxyacyl-CoA dehydrogenase.

It in the N-terminal section; belongs to the enoyl-CoA hydratase/isomerase family. The protein in the central section; belongs to the 3-hydroxyacyl-CoA dehydrogenase family. Heterotetramer of two alpha chains (FadJ) and two beta chains (FadI).

The protein localises to the cytoplasm. The catalysed reaction is a (3S)-3-hydroxyacyl-CoA = a (2E)-enoyl-CoA + H2O. It catalyses the reaction a 4-saturated-(3S)-3-hydroxyacyl-CoA = a (3E)-enoyl-CoA + H2O. It carries out the reaction a (3S)-3-hydroxyacyl-CoA + NAD(+) = a 3-oxoacyl-CoA + NADH + H(+). The enzyme catalyses (3S)-3-hydroxybutanoyl-CoA = (3R)-3-hydroxybutanoyl-CoA. The protein operates within lipid metabolism; fatty acid beta-oxidation. Its function is as follows. Catalyzes the formation of a hydroxyacyl-CoA by addition of water on enoyl-CoA. Also exhibits 3-hydroxyacyl-CoA epimerase and 3-hydroxyacyl-CoA dehydrogenase activities. The sequence is that of Fatty acid oxidation complex subunit alpha from Vibrio cholerae serotype O1 (strain ATCC 39315 / El Tor Inaba N16961).